Consider the following 344-residue polypeptide: GTP 3',8-cyclase (344 aa).

The Radical SAM core domain occupies 19 to 245 (PFGRAVTYLR…DIPYRTGGPA (227 aa)). Arg28 contacts GTP. Residues Cys35 and Cys39 each contribute to the [4Fe-4S] cluster site. Residue Tyr41 coordinates S-adenosyl-L-methionine. Cys42 contributes to the [4Fe-4S] cluster binding site. Arg77 is a GTP binding site. An S-adenosyl-L-methionine-binding site is contributed by Gly81. Thr111 lines the GTP pocket. Ser135 lines the S-adenosyl-L-methionine pocket. Lys171 contributes to the GTP binding site. Met205 is a binding site for S-adenosyl-L-methionine. Residues Cys268 and Cys271 each coordinate [4Fe-4S] cluster. 273 to 275 (RVR) is a binding site for GTP. Cys285 contacts [4Fe-4S] cluster.

The protein belongs to the radical SAM superfamily. MoaA family. Monomer and homodimer. Requires [4Fe-4S] cluster as cofactor.

The catalysed reaction is GTP + AH2 + S-adenosyl-L-methionine = (8S)-3',8-cyclo-7,8-dihydroguanosine 5'-triphosphate + 5'-deoxyadenosine + L-methionine + A + H(+). The protein operates within cofactor biosynthesis; molybdopterin biosynthesis. Catalyzes the cyclization of GTP to (8S)-3',8-cyclo-7,8-dihydroguanosine 5'-triphosphate. The protein is GTP 3',8-cyclase of Brucella ovis (strain ATCC 25840 / 63/290 / NCTC 10512).